A 908-amino-acid polypeptide reads, in one-letter code: DNA (cytosine-5)-methyltransferase 3A (908 aa).

A compositionally biased stretch (polar residues) spans 1-13; that stretch reads MPSSGPGDTSISS. Disordered stretches follow at residues 1–183 and 226–281; these read MPSS…PMPR and SQAS…PEYE. Residues 14–37 show a composition bias toward basic and acidic residues; the sequence is LEREDDRKEGEEQEENRGKEERQE. Positions 44–54 are enriched in basic residues; that stretch reads KVGRPGRKRKH. The segment covering 69 to 80 has biased composition (polar residues); it reads TTKSQPTAQDSG. Residue Ser-102 is modified to Phosphoserine. Residues 110-124 are compositionally biased toward low complexity; the sequence is GAPAEGEGTETPPEA. Thr-120 bears the Phosphothreonine mark. Lys-158 participates in a covalent cross-link: Glycyl lysine isopeptide (Lys-Gly) (interchain with G-Cter in SUMO2). An Omega-N-methylarginine modification is found at Arg-167. The segment at 195–399 is interaction with DNMT1 and DNMT3B; the sequence is SKRKRDEWLA…DTGKAVEVQN (205 aa). Phosphoserine is present on residues Ser-239 and Ser-251. The span at 242 to 256 shows a compositional bias: polar residues; that stretch reads AVQQPTDPASPTVAT. At Thr-257 the chain carries Phosphothreonine. The PWWP domain occupies 257 to 315; the sequence is TPEPVGADAGDKNATKAADDEPEYEDGRGFGIGELVWGKLRGFSWWPGRIVSWWMTGRS. Residues 265–275 show a composition bias toward basic and acidic residues; sequence AGDKNATKAAD. 2 positions are modified to phosphoserine: Ser-386 and Ser-389. The tract at residues 443–462 is disordered; that stretch reads AYAPPPPAKKPRKSTTEKPK. The ADD domain occupies 478–610; that stretch reads EVRQKCRNIE…LQMFFANNHD (133 aa). The GATA-type; atypical zinc-finger motif lies at 489–519; it reads ICISCGSLNVTLEHPLFIGGMCQNCKNCFLE. The interval 490-582 is interaction with the PRC2/EED-EZH2 complex; that stretch reads CISCGSLNVT…KEDPWNCYMC (93 aa). The PHD-type; atypical zinc-finger motif lies at 530–586; that stretch reads QSYCTICCGGREVLMCGNNNCCRCFCVECVDLLVGPGAAQAAIKEDPWNCYMCGHKG. The 279-residue stretch at 630 to 908 folds into the SAM-dependent MTase C5-type domain; the sequence is IRVLSLFDGI…APLKEYFACV (279 aa). S-adenosyl-L-methionine-binding positions include 637–641, Glu-660, and 682–684; these read DGIAT and DVR. Cys-706 is an active-site residue. Cys-706 bears the S-methylcysteine; by autocatalysis mark. 887-889 provides a ligand contact to S-adenosyl-L-methionine; the sequence is RSW.

It belongs to the class I-like SAM-binding methyltransferase superfamily. C5-methyltransferase family. As to quaternary structure, heterotetramer composed of 1 DNMT3A homodimer and 2 DNMT3L subunits (DNMT3L-DNMT3A-DNMT3A-DNMT3L). Interacts with DNMT1 and DNMT3B. Interacts with MPHOSPH8. Interacts with histone H3 that is not methylated at 'Lys-4' (H3K4). Binds the ZBTB18 transcriptional repressor. Interacts with SETDB1. Associates with HDAC1 through its ADD domain. Interacts with UHRF1. Interacts with the PRC2/EED-EZH2 complex. Interacts with UBC9, PIAS1 and PIAS2. Interacts with SPOCD1. Interacts with ZNF263; recruited to the SIX3 promoter along with other proteins involved in chromatin modification and transcriptional corepression where it contributes to transcriptional repression. Sumoylated; sumoylation disrupts the ability to interact with histone deacetylases (HDAC1 and HDAC2) and repress transcription. Post-translationally, auto-methylated at Cys-706: auto-methylation takes place in absence of DNA substrate and inactivates the DNA methyltransferase activity. Inactivation by auto-methylation may be used to inactivate unused DNA methyltransferases in the cell.

It is found in the nucleus. Its subcellular location is the chromosome. The protein resides in the cytoplasm. It catalyses the reaction a 2'-deoxycytidine in DNA + S-adenosyl-L-methionine = a 5-methyl-2'-deoxycytidine in DNA + S-adenosyl-L-homocysteine + H(+). The enzyme catalyses L-cysteinyl-[protein] + S-adenosyl-L-methionine = S-methyl-L-cysteinyl-[protein] + S-adenosyl-L-homocysteine + H(+). Its activity is regulated as follows. Activated by binding to the regulatory factor DNMT3L. Auto-methylation at Cys-706 in absence of DNA inactivates the DNA methyltransferase activity. In terms of biological role, required for genome-wide de novo methylation and is essential for the establishment of DNA methylation patterns during development. DNA methylation is coordinated with methylation of histones. It modifies DNA in a non-processive manner and also methylates non-CpG sites. May preferentially methylate DNA linker between 2 nucleosomal cores and is inhibited by histone H1. Plays a role in paternal and maternal imprinting. Required for methylation of most imprinted loci in germ cells. Acts as a transcriptional corepressor for ZBTB18. Recruited to trimethylated 'Lys-36' of histone H3 (H3K36me3) sites. Can actively repress transcription through the recruitment of HDAC activity. Also has weak auto-methylation activity on Cys-706 in absence of DNA. The chain is DNA (cytosine-5)-methyltransferase 3A (Dnmt3a) from Rattus norvegicus (Rat).